An 81-amino-acid chain; its full sequence is Short neurotoxin 1 (81 aa).

Positions Met1–Thr21 are cleaved as a signal peptide. 4 cysteine pairs are disulfide-bonded: Cys24-Cys43, Cys38-Cys60, Cys62-Cys73, and Cys74-Cys79.

This sequence belongs to the three-finger toxin family. Short-chain subfamily. Type I alpha-neurotoxin sub-subfamily. Expressed by the venom gland.

It localises to the secreted. Functionally, binds to muscle nicotinic acetylcholine receptor (nAChR) and inhibit acetylcholine from binding to the receptor, thereby impairing neuromuscular transmission. The sequence is that of Short neurotoxin 1 from Cryptophis nigrescens (Eastern small-eyed snake).